Reading from the N-terminus, the 221-residue chain is Phosphoribosylformylglycinamidine synthase subunit PurQ (221 aa).

Residues 2-221 (NVGVIVFPGS…FAGLLEPVAA (220 aa)) enclose the Glutamine amidotransferase type-1 domain. C86 acts as the Nucleophile in catalysis. Residues H194 and E196 contribute to the active site.

Part of the FGAM synthase complex composed of 1 PurL, 1 PurQ and 2 PurS subunits.

The protein localises to the cytoplasm. The catalysed reaction is N(2)-formyl-N(1)-(5-phospho-beta-D-ribosyl)glycinamide + L-glutamine + ATP + H2O = 2-formamido-N(1)-(5-O-phospho-beta-D-ribosyl)acetamidine + L-glutamate + ADP + phosphate + H(+). The enzyme catalyses L-glutamine + H2O = L-glutamate + NH4(+). It participates in purine metabolism; IMP biosynthesis via de novo pathway; 5-amino-1-(5-phospho-D-ribosyl)imidazole from N(2)-formyl-N(1)-(5-phospho-D-ribosyl)glycinamide: step 1/2. Its function is as follows. Part of the phosphoribosylformylglycinamidine synthase complex involved in the purines biosynthetic pathway. Catalyzes the ATP-dependent conversion of formylglycinamide ribonucleotide (FGAR) and glutamine to yield formylglycinamidine ribonucleotide (FGAM) and glutamate. The FGAM synthase complex is composed of three subunits. PurQ produces an ammonia molecule by converting glutamine to glutamate. PurL transfers the ammonia molecule to FGAR to form FGAM in an ATP-dependent manner. PurS interacts with PurQ and PurL and is thought to assist in the transfer of the ammonia molecule from PurQ to PurL. The protein is Phosphoribosylformylglycinamidine synthase subunit PurQ of Synechococcus sp. (strain ATCC 27144 / PCC 6301 / SAUG 1402/1) (Anacystis nidulans).